Here is a 106-residue protein sequence, read N- to C-terminus: Large ribosomal subunit protein uL24 (106 aa).

Positions 1-20 (MNKRAKSKNREPLRKSPVKR) are disordered. A compositionally biased stretch (basic and acidic residues) spans 8 to 20 (KNREPLRKSPVKR).

This sequence belongs to the universal ribosomal protein uL24 family. Part of the 50S ribosomal subunit.

One of two assembly initiator proteins, it binds directly to the 5'-end of the 23S rRNA, where it nucleates assembly of the 50S subunit. Its function is as follows. One of the proteins that surrounds the polypeptide exit tunnel on the outside of the subunit. This Methylacidiphilum infernorum (isolate V4) (Methylokorus infernorum (strain V4)) protein is Large ribosomal subunit protein uL24.